The following is a 95-amino-acid chain: Orphan antitoxin ParD2 (95 aa).

Antitoxin component of a non-functional type II toxin-antitoxin (TA system). Does not neutralize the effect of any of the RelE or ParE toxins. The sequence is that of Orphan antitoxin ParD2 (parD2) from Caulobacter vibrioides (strain ATCC 19089 / CIP 103742 / CB 15) (Caulobacter crescentus).